The sequence spans 95 residues: Large ribosomal subunit protein uL23 (95 aa).

The protein belongs to the universal ribosomal protein uL23 family. Part of the 50S ribosomal subunit. Contacts protein L29, and trigger factor when it is bound to the ribosome.

Functionally, one of the early assembly proteins it binds 23S rRNA. One of the proteins that surrounds the polypeptide exit tunnel on the outside of the ribosome. Forms the main docking site for trigger factor binding to the ribosome. The protein is Large ribosomal subunit protein uL23 of Coxiella burnetii (strain RSA 493 / Nine Mile phase I).